A 168-amino-acid chain; its full sequence is Endoribonuclease YbeY (168 aa).

3 residues coordinate Zn(2+): H125, H129, and H135.

The protein belongs to the endoribonuclease YbeY family. It depends on Zn(2+) as a cofactor.

The protein resides in the cytoplasm. Single strand-specific metallo-endoribonuclease involved in late-stage 70S ribosome quality control and in maturation of the 3' terminus of the 16S rRNA. The sequence is that of Endoribonuclease YbeY from Rhodopseudomonas palustris (strain BisB18).